The sequence spans 610 residues: Tyrosine-protein kinase Drl (610 aa).

The signal sequence occupies residues 1 to 20 (MAPNLLTIGLLLTLIASGQA). The Extracellular portion of the chain corresponds to 21 to 242 (HLNIFLNLHE…RENLVPPASG (222 aa)). Residues 24 to 155 (IFLNLHEVLR…NLIFKRKKIC (132 aa)) enclose the WIF domain. N-linked (GlcNAc...) asparagine glycans are attached at residues N63, N99, and N143. The tract at residues 202-230 (QAPEKQRPVVTESPVGRGNSGGSKRDFDP) is disordered. A helical transmembrane segment spans residues 243 to 263 (LVTLIVGGILALVLVSTLILI). Residues 264–610 (AYCAKGPSKR…EFHTQITRYV (347 aa)) lie on the Cytoplasmic side of the membrane. One can recognise a Protein kinase domain in the interval 343–606 (VRLSCLVQEG…ICLSEFHTQI (264 aa)). Residues 349 to 357 (VQEGNFGRI) and K371 contribute to the ATP site. Residue D468 is the Proton acceptor of the active site. Y498 carries the phosphotyrosine; by autocatalysis modification.

This sequence belongs to the protein kinase superfamily. Tyr protein kinase family. In terms of tissue distribution, in the embryonic abdominal hemisegment, expression is restricted to cell body, axon and growth cone of a cluster of 20 ventral nerve cord interneurons. During muscle growth and attachment events in the embryonic abdominal hemisegment, expression is in somatic muscle fibers 21-23 at 10-13 hours and 2 patches of approximately 15 neighboring epidermal cells (dorsal and ventral attachment sites) at 6-13 hours.

The protein localises to the cell membrane. The enzyme catalyses L-tyrosyl-[protein] + ATP = O-phospho-L-tyrosyl-[protein] + ADP + H(+). Functionally, probable coreceptor of Wnt proteins. Involved in neuronal pathway recognition and ventral muscle attachment site selection. Non-vital for development. May be part of a signal transduction cascade involved in learning and possibly memory. The sequence is that of Tyrosine-protein kinase Drl (drl) from Drosophila melanogaster (Fruit fly).